The following is a 135-amino-acid chain: HTH-type transcriptional regulator CueR (135 aa).

Residues 1–69 (MNISDVAKIT…LEESGELVNL (69 aa)) form the HTH merR-type domain. Positions 4–23 (SDVAKITGLTSKAIRFYEEK) form a DNA-binding region, H-T-H motif. Cys-112 and Cys-120 together coordinate Cu(+).

As to quaternary structure, homodimer.

It localises to the cytoplasm. Functionally, regulates the transcription of the copA and cueO genes. It detects cytoplasmic copper stress and activates transcription in response to increasing copper concentrations. This Escherichia coli O6:H1 (strain CFT073 / ATCC 700928 / UPEC) protein is HTH-type transcriptional regulator CueR (cueR).